Consider the following 398-residue polypeptide: MGFIKTLSLSLAAASAANAAKILSPSRPDDVIPNQYIVVMKDGVSGEAFGSHRAWVSDMHHTNLTRRALLNHGIKKTYDFMRMKGYSGVFDRDTIKDISQSPDVAFIEHDHVVRLTELVEQPDAPTWGLGRVSHQEPGNMDYVYDDTAGDGVWAYDIDTGVDIEHPDFEGRAVWGSNHVDDDDTDGNGHGTHVGGTIGSLTYGVAKKVRIIAVKVLDARGSGSNSGVIAGIDWSVNHAMENNVAERAVINLSLGGARSDTTNMAVANAVQAGLHVAVAAGNDNEDAENSSPASEPTVCTVAASNINDQKASFSNFGSVVDIYAPGEEILSLAPGGGTQTLSGTSMAAPHIAGMGAYLIALENITASAACDRIKELGLEVINNPGAGTTNKLTYNGNGQ.

An N-terminal signal peptide occupies residues 1–19 (MGFIKTLSLSLAAASAANA). A propeptide spanning residues 20 to 116 (AKILSPSRPD…IEHDHVVRLT (97 aa)) is cleaved from the precursor. The region spanning 35 to 115 (QYIVVMKDGV…FIEHDHVVRL (81 aa)) is the Inhibitor I9 domain. Residues 126-398 (TWGLGRVSHQ…NKLTYNGNGQ (273 aa)) enclose the Peptidase S8 domain. Active-site charge relay system residues include D158 and H189. N250 carries N-linked (GlcNAc...) asparagine glycosylation. The active-site Charge relay system is the S344. N362 is a glycosylation site (N-linked (GlcNAc...) asparagine).

This sequence belongs to the peptidase S8 family.

It localises to the secreted. In terms of biological role, secreted subtilisin-like serine protease with keratinolytic activity that contributes to pathogenicity. This chain is Subtilisin-like protease CPC735_015300, found in Coccidioides posadasii (strain C735) (Valley fever fungus).